The chain runs to 144 residues: MKTYRIKPEEVERKWWVVDATGKTLGRLASEIAKILRGKHKPYYQPDVDCGDFVIVINAEKIRVTGKKLEQKKYYWHSRYPGGLKERTLKWMLENKPEEVIRLAVKRMLPKNRLGHRMLKKLKVYRGPEHPHQAQKPQPLEVKA.

The segment at tyrosine 125–alanine 144 is disordered.

This sequence belongs to the universal ribosomal protein uL13 family. Part of the 50S ribosomal subunit.

In terms of biological role, this protein is one of the early assembly proteins of the 50S ribosomal subunit, although it is not seen to bind rRNA by itself. It is important during the early stages of 50S assembly. The sequence is that of Large ribosomal subunit protein uL13 from Aquifex aeolicus (strain VF5).